Consider the following 674-residue polypeptide: Growth arrest-specific protein 6 (674 aa).

Positions 1-27 are cleaved as a signal peptide; the sequence is MPPPPGPAAALGTALLLLLLASESSHT. The Gla domain occupies 50–91; sequence FEEAKQGHLERECVEEVCSKEEAREVFENDPETEYFYPRYQE. Cysteines 62 and 67 form a disulfide. At serine 68 the chain carries Phosphoserine. The region spanning 113–151 is the EGF-like 1; calcium-binding domain; the sequence is LPDQCTPNPCDKKGTHICQDLMGNFFCVCTDGWGGRLCD. 14 disulfide bridges follow: cysteine 117-cysteine 130, cysteine 122-cysteine 139, cysteine 141-cysteine 150, cysteine 157-cysteine 168, cysteine 164-cysteine 177, cysteine 179-cysteine 192, cysteine 198-cysteine 209, cysteine 204-cysteine 218, cysteine 220-cysteine 233, cysteine 239-cysteine 248, cysteine 244-cysteine 257, cysteine 259-cysteine 274, cysteine 280-cysteine 566, and cysteine 441-cysteine 467. An EGF-like 2; calcium-binding domain is found at 153 to 193; sequence DVNECVQKNGGCSQVCHNKPGSFQCACHSGFSLASDGQTCQ. Residues 194–234 enclose the EGF-like 3; calcium-binding domain; that stretch reads DIDECTDSDTCGDARCKNLPGSYSCLCDEGYTYSSKEKTCQ. An EGF-like 4; calcium-binding domain is found at 235 to 275; that stretch reads DVDECQQDRCEQTCVNSPGSYTCHCDGRGGLKLSPDMDTCE. Laminin G-like domains are found at residues 295–467 and 474–666; these read GRMF…KMQC and GSFF…SHSC. Ca(2+) contacts are provided by aspartate 326 and glutamate 328. An N-linked (GlcNAc...) asparagine glycan is attached at asparagine 417. Ca(2+) is bound at residue arginine 437. Asparagine 488 carries an N-linked (GlcNAc...) asparagine glycan. Threonine 609 carries the phosphothreonine modification. The residue at position 614 (serine 614) is a Phosphoserine. 2 positions are modified to phosphothreonine: threonine 617 and threonine 633. Tyrosine 636 is modified (phosphotyrosine). A disulfide bond links cysteine 639 and cysteine 666. A Ca(2+)-binding site is contributed by aspartate 652.

In terms of assembly, heterodimer and heterotetramer with AXL. Post-translationally, gamma-carboxyglutamate residues are formed by vitamin K dependent carboxylation. These residues are essential for the binding of calcium.

It localises to the secreted. Functionally, ligand for tyrosine-protein kinase receptors AXL, TYRO3 and MER whose signaling is implicated in cell growth and survival, cell adhesion and cell migration. GAS6/AXL signaling plays a role in various processes such as endothelial cell survival during acidification by preventing apoptosis, optimal cytokine signaling during human natural killer cell development, hepatic regeneration, gonadotropin-releasing hormone neuron survival and migration, platelet activation, or regulation of thrombotic responses. The polypeptide is Growth arrest-specific protein 6 (Gas6) (Mus musculus (Mouse)).